Here is a 405-residue protein sequence, read N- to C-terminus: Dynactin subunit 2 (405 aa).

The tract at residues Met1 to Asp24 is disordered. Coiled coils occupy residues Gln102–Ser125 and Gln379–Lys405.

Belongs to the dynactin subunit 2 family. In terms of assembly, subunit of dynactin, a multiprotein complex part of a tripartite complex with dynein and a adapter, such as BICDL1, BICD2 or HOOK3. The dynactin complex is built around ACTR1A/ACTB filament and consists of an actin-related filament composed of a shoulder domain, a pointed end and a barbed end. Its length is defined by its flexible shoulder domain. The soulder is composed of 2 DCTN1 subunits, 4 DCTN2 and 2 DCTN3.

It is found in the cytoplasm. Its subcellular location is the cytoskeleton. It localises to the microtubule organizing center. The protein localises to the centrosome. The protein resides in the membrane. Functionally, part of the dynactin complex that activates the molecular motor dynein for ultra-processive transport along microtubules. In the dynactin soulder domain, binds the ACTR1A filament and acts as a molecular ruler to determine the length. Modulates cytoplasmic dynein binding to an organelle, and plays a role in prometaphase chromosome alignment and spindle organization during mitosis. Involved in anchoring microtubules to centrosomes. The protein is Dynactin subunit 2 (dctn2) of Danio rerio (Zebrafish).